The sequence spans 32 residues: Alpha-amylase inhibitor AAI (32 aa).

3 cysteine pairs are disulfide-bonded: Cys1–Cys18, Cys8–Cys23, and Cys17–Cys31.

In terms of tissue distribution, endosperm.

Its function is as follows. Alpha-amylase inhibitor. It is active against alpha-amylases from Tribolium castaneum and Prostephanus truncatus larvae. The sequence is that of Alpha-amylase inhibitor AAI (AAI) from Amaranthus hypochondriacus (Prince-of-Wales feather).